The sequence spans 31 residues: Cyclotide glopa C (31 aa).

The segment at residues 1–31 (GDLPICGETCFEGGNCRIPGCTCVWPFCSKN) is a cross-link (cyclopeptide (Gly-Asn)). Cystine bridges form between Cys6–Cys21, Cys10–Cys23, and Cys16–Cys28.

Post-translationally, this is a cyclic peptide.

Its function is as follows. Probably participates in a plant defense mechanism. The chain is Cyclotide glopa C from Gloeospermum pauciflorum.